Reading from the N-terminus, the 541-residue chain is Arginine--tRNA ligase (541 aa).

The short motif at 119-129 (ANPTGPLHIGH) is the 'HIGH' region element.

The protein belongs to the class-I aminoacyl-tRNA synthetase family. As to quaternary structure, monomer.

The protein localises to the cytoplasm. It catalyses the reaction tRNA(Arg) + L-arginine + ATP = L-arginyl-tRNA(Arg) + AMP + diphosphate. In Helicobacter pylori (strain ATCC 700392 / 26695) (Campylobacter pylori), this protein is Arginine--tRNA ligase (argS).